A 284-amino-acid chain; its full sequence is Probable palmitoyltransferase ZDHHC24 (284 aa).

The Cytoplasmic portion of the chain corresponds to 1–18; sequence MGQPWAAGSTDGAPAQLP. The chain crosses the membrane as a helical span at residues 19–39; sequence LVLTALWAAAVGLELAYVLVL. Topologically, residues 40–52 are extracellular; the sequence is GPGPPPLGPLARA. A helical membrane pass occupies residues 53 to 73; sequence LQLALAAFQLLNLLGNVGLFL. Over 74 to 137 the chain is Cytoplasmic; the sequence is RSDPSIRGVM…GRCVGFGNYR (64 aa). A DHHC domain is found at 94–144; sequence AYCYQCQSQVPPRSGHCSACRVCILRRDHHCRLLGRCVGFGNYRPFLCLLL. Cys-124 acts as the S-palmitoyl cysteine intermediate in catalysis. Residues 138–158 form a helical membrane-spanning segment; sequence PFLCLLLHAAGVLLHVSVLLG. Topologically, residues 159-166 are extracellular; that stretch reads PALSALLR. The chain crosses the membrane as a helical span at residues 167-187; it reads AHTPLHMAALLLLPWLMLLTG. Topologically, residues 188 to 201 are cytoplasmic; that stretch reads RVSLAQFALAFVTD. Residues 202 to 222 form a helical membrane-spanning segment; sequence TCVAGALLCGAGLLFHGMLLL. Over 223–284 the chain is Extracellular; it reads RGQTTWEWAR…TTADVGHTAS (62 aa).

The protein belongs to the DHHC palmitoyltransferase family.

The protein localises to the membrane. It carries out the reaction L-cysteinyl-[protein] + hexadecanoyl-CoA = S-hexadecanoyl-L-cysteinyl-[protein] + CoA. Functionally, probable palmitoyltransferase that could catalyze the addition of palmitate onto various protein substrates. The protein is Probable palmitoyltransferase ZDHHC24 of Homo sapiens (Human).